Here is a 376-residue protein sequence, read N- to C-terminus: Copper-containing nitrite reductase (376 aa).

Positions 1 to 33 form a signal peptide, tat-type signal; that stretch reads MSEQFQMTRRSMLAGAAIAGAVTPLIGAVSAHA. Plastocyanin-like domains lie at 98 to 193 and 258 to 359; these read MTFN…IMVL and GAVG…FAVT. The Cu cation site is built by His-131, His-136, His-171, Cys-172, His-181, Met-186, and His-342.

This sequence belongs to the multicopper oxidase family. In terms of assembly, homotrimer. Cu(2+) is required as a cofactor. Cu(+) serves as cofactor. It depends on FAD as a cofactor. In terms of processing, predicted to be exported by the Tat system. The position of the signal peptide cleavage has not been experimentally proven.

Its subcellular location is the periplasm. It catalyses the reaction nitric oxide + Fe(III)-[cytochrome c] + H2O = Fe(II)-[cytochrome c] + nitrite + 2 H(+). It participates in nitrogen metabolism; nitrate reduction (denitrification); dinitrogen from nitrate: step 2/4. This is Copper-containing nitrite reductase (nirK) from Rhizobium meliloti (strain 1021) (Ensifer meliloti).